Reading from the N-terminus, the 635-residue chain is 1-deoxy-D-xylulose-5-phosphate synthase (635 aa).

Thiamine diphosphate contacts are provided by residues histidine 78 and 119 to 121 (GHA). Aspartate 151 serves as a coordination point for Mg(2+). Thiamine diphosphate-binding positions include 152–153 (GA), asparagine 180, and tyrosine 291. Position 180 (asparagine 180) interacts with Mg(2+). Positions 305–325 (PAFEDRGGTPVTRGSDGRPPY) are disordered. Residue glutamate 374 participates in thiamine diphosphate binding.

The protein belongs to the transketolase family. DXPS subfamily. Homodimer. Mg(2+) is required as a cofactor. Thiamine diphosphate serves as cofactor.

It catalyses the reaction D-glyceraldehyde 3-phosphate + pyruvate + H(+) = 1-deoxy-D-xylulose 5-phosphate + CO2. It functions in the pathway metabolic intermediate biosynthesis; 1-deoxy-D-xylulose 5-phosphate biosynthesis; 1-deoxy-D-xylulose 5-phosphate from D-glyceraldehyde 3-phosphate and pyruvate: step 1/1. Functionally, catalyzes the acyloin condensation reaction between C atoms 2 and 3 of pyruvate and glyceraldehyde 3-phosphate to yield 1-deoxy-D-xylulose-5-phosphate (DXP). This chain is 1-deoxy-D-xylulose-5-phosphate synthase, found in Rhodopirellula baltica (strain DSM 10527 / NCIMB 13988 / SH1).